Consider the following 95-residue polypeptide: MEMARAHVFIRGKVQGVFFRQSMKEVAMRNGVKGWVRNRSDGKTVEAVLEGPRDAVMKVLEWARIGPPGARVEDIEVQWEEYKGEFKDFKILPTV.

An Acylphosphatase-like domain is found at 5–93 (RAHVFIRGKV…GEFKDFKILP (89 aa)). Catalysis depends on residues arginine 20 and asparagine 38.

This sequence belongs to the acylphosphatase family.

The enzyme catalyses an acyl phosphate + H2O = a carboxylate + phosphate + H(+). The chain is Acylphosphatase (acyP) from Pyrobaculum aerophilum (strain ATCC 51768 / DSM 7523 / JCM 9630 / CIP 104966 / NBRC 100827 / IM2).